A 357-amino-acid polypeptide reads, in one-letter code: MQILEEKPKEGIVKVKAETLDDLWHLYHVIDPGDVVYAKTLRKQAQRSDSLRAEKVEVIPVYLGVKAEKINFHKFANQVRVTGPIVYASRDDVPLGKYHTITIEEGTVVTIQKPRWKEHHIERLKEAIEASKRAKVMIVVIDEGEADIALVREYGVEMVASIRRNLGGKRYNTDRESEEKRFFHDLAKTMAELMEREKIEKAIVAGPGFVKEDFHKFLRENYPELAKKVVIEDTSVTGRTGIYEVIKRGTVDRVYHENRVAKEVQLVEKVLEHVARNTGLATYGLREVEEAVNYGAVETLLVLDELLKGEHRERIEELMDAVRYARGEVVIVSSEHEGGEKLKALGGLAALLRFRVK.

Belongs to the eukaryotic release factor 1 family. Pelota subfamily. In terms of assembly, monomer. A divalent metal cation is required as a cofactor.

It localises to the cytoplasm. Functionally, may function in recognizing stalled ribosomes, interact with stem-loop structures in stalled mRNA molecules, and effect endonucleolytic cleavage of the mRNA. May play a role in the release non-functional ribosomes and degradation of damaged mRNAs. Has endoribonuclease activity. This is Protein pelota homolog from Thermococcus gammatolerans (strain DSM 15229 / JCM 11827 / EJ3).